The primary structure comprises 130 residues: Ribosome-binding factor A (130 aa).

It belongs to the RbfA family. As to quaternary structure, monomer. Binds 30S ribosomal subunits, but not 50S ribosomal subunits or 70S ribosomes.

It localises to the cytoplasm. Functionally, one of several proteins that assist in the late maturation steps of the functional core of the 30S ribosomal subunit. Associates with free 30S ribosomal subunits (but not with 30S subunits that are part of 70S ribosomes or polysomes). Required for efficient processing of 16S rRNA. May interact with the 5'-terminal helix region of 16S rRNA. This is Ribosome-binding factor A from Lachnospira eligens (strain ATCC 27750 / DSM 3376 / VPI C15-48 / C15-B4) (Eubacterium eligens).